Consider the following 318-residue polypeptide: Lymphatic vessel endothelial hyaluronic acid receptor 1 (318 aa).

An N-terminal signal peptide occupies residues 1–23 (MLQHTSLVLLLASIWTTRHPVQG). Residues 24 to 234 (ADLVQDLSIS…EAAGFGGVPT (211 aa)) are Extracellular-facing. One can recognise a Link domain in the interval 39–129 (GVALVGRNKN…SQKFKAYCHN (91 aa)). Asparagine 52 carries N-linked (GlcNAc...) asparagine glycosylation. 2 disulfides stabilise this stretch: cysteine 60/cysteine 127 and cysteine 84/cysteine 105. Asparagine 129 carries an N-linked (GlcNAc...) asparagine glycan. Residues 235 to 255 (ALLVLALLFFGAAAVLAVCYV) traverse the membrane as a helical segment. At 256–318 (KRYVKAFPFT…TTVRCLEAEV (63 aa)) the chain is on the cytoplasmic side. The span at 284–305 (ADDVNANEESKKTIKNPEEAKS) shows a compositional bias: basic and acidic residues. Positions 284–318 (ADDVNANEESKKTIKNPEEAKSPPKTTVRCLEAEV) are disordered.

As to quaternary structure, homodimer; disulfide-linked. Interacts with PDGFB and IGFBP3. Forms a transient ternary complex with PDGFB and PDGFRB in TGN. Post-translationally, O-glycosylated.

Its subcellular location is the membrane. In terms of biological role, ligand-specific transporter trafficking between intracellular organelles (TGN) and the plasma membrane. Plays a role in autocrine regulation of cell growth mediated by growth regulators containing cell surface retention sequence binding (CRS). May act as a hyaluronan (HA) transporter, either mediating its uptake for catabolism within lymphatic endothelial cells themselves, or its transport into the lumen of afferent lymphatic vessels for subsequent re-uptake and degradation in lymph nodes. Binds to pericelluar hyaluronan matrices deposited on the surface of leukocytes and facilitates cell adhesion and migration through lymphatic endothelium. The protein is Lymphatic vessel endothelial hyaluronic acid receptor 1 (Lyve1) of Mus musculus (Mouse).